A 181-amino-acid polypeptide reads, in one-letter code: Peptidyl-prolyl cis-trans isomerase H (181 aa).

One can recognise a PPIase cyclophilin-type domain in the interval 17–180 (FFDIALGGVP…QDVIITQCGE (164 aa)).

It belongs to the cyclophilin-type PPIase family. PPIase H subfamily.

It is found in the nucleus. It carries out the reaction [protein]-peptidylproline (omega=180) = [protein]-peptidylproline (omega=0). Its function is as follows. PPIases accelerate the folding of proteins. It catalyzes the cis-trans isomerization of proline imidic peptide bonds in oligopeptides. The sequence is that of Peptidyl-prolyl cis-trans isomerase H (cyp3) from Aspergillus fumigatus (strain ATCC MYA-4609 / CBS 101355 / FGSC A1100 / Af293) (Neosartorya fumigata).